We begin with the raw amino-acid sequence, 273 residues long: Acetyl-coenzyme A carboxylase carboxyl transferase subunit alpha (273 aa).

The region spanning 1–244 (MKKATQSKAW…KVVLKQALDE (244 aa)) is the CoA carboxyltransferase C-terminal domain.

It belongs to the AccA family. As to quaternary structure, acetyl-CoA carboxylase is a heterohexamer composed of biotin carboxyl carrier protein (AccB), biotin carboxylase (AccC) and two subunits each of ACCase subunit alpha (AccA) and ACCase subunit beta (AccD).

It is found in the cytoplasm. It carries out the reaction N(6)-carboxybiotinyl-L-lysyl-[protein] + acetyl-CoA = N(6)-biotinyl-L-lysyl-[protein] + malonyl-CoA. Its pathway is lipid metabolism; malonyl-CoA biosynthesis; malonyl-CoA from acetyl-CoA: step 1/1. In terms of biological role, component of the acetyl coenzyme A carboxylase (ACC) complex. First, biotin carboxylase catalyzes the carboxylation of biotin on its carrier protein (BCCP) and then the CO(2) group is transferred by the carboxyltransferase to acetyl-CoA to form malonyl-CoA. This chain is Acetyl-coenzyme A carboxylase carboxyl transferase subunit alpha, found in Acinetobacter baumannii (strain AB0057).